The primary structure comprises 397 residues: Enoyl-[acyl-carrier-protein] reductase [NADH] (397 aa).

Residues 48-53, 74-75, 111-112, and 139-140 contribute to the NAD(+) site; these read GASTGY, FE, DA, and VA. Substrate is bound at residue Y225. Residue Y235 is the Proton donor of the active site. NAD(+) is bound by residues K244 and 273–275; that span reads VVT.

The protein belongs to the TER reductase family. In terms of assembly, monomer.

The catalysed reaction is a 2,3-saturated acyl-[ACP] + NAD(+) = a (2E)-enoyl-[ACP] + NADH + H(+). It participates in lipid metabolism; fatty acid biosynthesis. Involved in the final reduction of the elongation cycle of fatty acid synthesis (FAS II). Catalyzes the reduction of a carbon-carbon double bond in an enoyl moiety that is covalently linked to an acyl carrier protein (ACP). The polypeptide is Enoyl-[acyl-carrier-protein] reductase [NADH] (Burkholderia pseudomallei (strain 1106a)).